A 274-amino-acid polypeptide reads, in one-letter code: Penicillin-insensitive murein endopeptidase (274 aa).

Positions 1 to 19 (MNKTAIALLALLASSASLA) are cleaved as a signal peptide. 3 cysteine pairs are disulfide-bonded: C44–C265, C187–C235, and C216–C223. Zn(2+)-binding residues include H110, H113, D120, D147, H150, and H211. Residues 228 to 274 (LPPSGDGCGAELQSWFEPPKPGTTKPEKKTPPPLPPSCQALLDEHVI) form a disordered region.

It belongs to the peptidase M74 family. Dimer. It depends on Zn(2+) as a cofactor.

Its subcellular location is the periplasm. With respect to regulation, inhibited by Zn(2+) at 10 mM and by metal chelating agents EDTA and 1,10-phenanthroline. Murein endopeptidase that cleaves the D-alanyl-meso-2,6-diamino-pimelyl amide bond that connects peptidoglycan strands. Likely plays a role in the removal of murein from the sacculus and could also play a role in the integration of nascent murein strands into the sacculus. This is Penicillin-insensitive murein endopeptidase (mepA) from Escherichia coli (strain K12).